A 720-amino-acid chain; its full sequence is DNA ligase (720 aa).

Residues 57 to 61, 106 to 107, and Glu140 each bind NAD(+); these read DAEYD and SL. Lys142 functions as the N6-AMP-lysine intermediate in the catalytic mechanism. Arg163, Glu200, Lys316, and Lys340 together coordinate NAD(+). Positions 434, 437, 458, and 464 each coordinate Zn(2+). In terms of domain architecture, BRCT spans 643 to 720; sequence AAASPVSGKT…TEDEWFELVG (78 aa).

The protein belongs to the NAD-dependent DNA ligase family. LigA subfamily. Mg(2+) serves as cofactor. Requires Mn(2+) as cofactor.

It catalyses the reaction NAD(+) + (deoxyribonucleotide)n-3'-hydroxyl + 5'-phospho-(deoxyribonucleotide)m = (deoxyribonucleotide)n+m + AMP + beta-nicotinamide D-nucleotide.. DNA ligase that catalyzes the formation of phosphodiester linkages between 5'-phosphoryl and 3'-hydroxyl groups in double-stranded DNA using NAD as a coenzyme and as the energy source for the reaction. It is essential for DNA replication and repair of damaged DNA. The polypeptide is DNA ligase (Xanthobacter autotrophicus (strain ATCC BAA-1158 / Py2)).